The chain runs to 144 residues: Large ribosomal subunit protein uL11 (144 aa).

Belongs to the universal ribosomal protein uL11 family. Part of the ribosomal stalk of the 50S ribosomal subunit. Interacts with L10 and the large rRNA to form the base of the stalk. L10 forms an elongated spine to which L12 dimers bind in a sequential fashion forming a multimeric L10(L12)X complex. Post-translationally, one or more lysine residues are methylated.

In terms of biological role, forms part of the ribosomal stalk which helps the ribosome interact with GTP-bound translation factors. In Neisseria meningitidis serogroup C (strain 053442), this protein is Large ribosomal subunit protein uL11.